The primary structure comprises 26 residues: L-amino-acid oxidase (26 aa).

Belongs to the flavin monoamine oxidase family. Monomer. It depends on FAD as a cofactor. Post-translationally, not glycosylated. Expressed by the ink gland.

It localises to the secreted. It carries out the reaction an L-alpha-amino acid + O2 + H2O = a 2-oxocarboxylate + H2O2 + NH4(+). Its function is as follows. Catalyzes the oxidative deamination of positively charged L-amino acids L-Lys and L-Arg but not of amino acids L-His, L-Asp or L-Glu. Has antibacterial activity against the Gram-positive bacterium S.aureus (MIC=15 ug/ml). This antibacterial activity is bacteriostatic in the absence of amino acids L-Lys or L-Arg but bactericidal in their presence. The antibacterial effect is largely dependent on H(2)O(2) produced in the oxidative deamination of substrates. Has hemagglutinating activity towards rabbit erythrocytes. Hemagglutinating activity is inhibited by the glycoprotein fetuin, but not by glucose, mannose, galactose, N-acetylglucosamine, N-acetylgalactosamine or sialic acid. The polypeptide is L-amino-acid oxidase (Aplysia dactylomela (Spotted sea hare)).